The primary structure comprises 349 residues: N-acetyl-gamma-glutamyl-phosphate reductase (349 aa).

Cys-152 is a catalytic residue.

The protein belongs to the NAGSA dehydrogenase family. Type 1 subfamily.

It is found in the cytoplasm. The catalysed reaction is N-acetyl-L-glutamate 5-semialdehyde + phosphate + NADP(+) = N-acetyl-L-glutamyl 5-phosphate + NADPH + H(+). Its pathway is amino-acid biosynthesis; L-arginine biosynthesis; N(2)-acetyl-L-ornithine from L-glutamate: step 3/4. Catalyzes the NADPH-dependent reduction of N-acetyl-5-glutamyl phosphate to yield N-acetyl-L-glutamate 5-semialdehyde. The polypeptide is N-acetyl-gamma-glutamyl-phosphate reductase (Clavibacter sepedonicus (Clavibacter michiganensis subsp. sepedonicus)).